The sequence spans 180 residues: Large ribosomal subunit protein uL10 (180 aa).

This sequence belongs to the universal ribosomal protein uL10 family. As to quaternary structure, part of the ribosomal stalk of the 50S ribosomal subunit. The N-terminus interacts with L11 and the large rRNA to form the base of the stalk. The C-terminus forms an elongated spine to which L12 dimers bind in a sequential fashion forming a multimeric L10(L12)X complex.

Functionally, forms part of the ribosomal stalk, playing a central role in the interaction of the ribosome with GTP-bound translation factors. The chain is Large ribosomal subunit protein uL10 from Thermosipho africanus (strain TCF52B).